Reading from the N-terminus, the 457-residue chain is Protein N-terminal amidase (457 aa).

In terms of domain architecture, CN hydrolase spans 19 to 453; the sequence is LKVLVIQLNP…EGAILREVQF (435 aa). Catalysis depends on glutamate 63, which acts as the Proton acceptor. The active-site Proton donor is the lysine 136. Cysteine 187 serves as the catalytic Nucleophile.

It belongs to the carbon-nitrogen hydrolase superfamily.

Its function is as follows. Deamidates N-terminal Asn and Gln. Component of a targeting complex in the N-end rule pathway. This Saccharomyces cerevisiae (strain ATCC 204508 / S288c) (Baker's yeast) protein is Protein N-terminal amidase (NTA1).